The chain runs to 159 residues: Disulfide bond formation protein B (159 aa).

Residues 1–8 lie on the Cytoplasmic side of the membrane; sequence MQANSRAF. The helical transmembrane segment at 9–25 threads the bilayer; the sequence is FLLIAVIAFGLVGYALY. Residues 26–43 lie on the Periplasmic side of the membrane; sequence LQHVEGLQPCPLCVLQRF. Cysteine 35 and cysteine 38 are oxidised to a cystine. Residues 44 to 57 form a helical membrane-spanning segment; sequence AFVGIGVFSLLAAL. Topologically, residues 58–63 are cytoplasmic; the sequence is SSATRL. A helical transmembrane segment spans residues 64–81; that stretch reads LWHGLGMLSGLGGIFVAG. The Periplasmic segment spans residues 82 to 136; sequence YHVSLLLNPKASCGIDPIENWVNALPTAKWLPQVFESDGLCTAPLPPVLGVSIPL. Cysteine 94 and cysteine 122 are oxidised to a cystine. Residues 137–155 form a helical membrane-spanning segment; the sequence is WSLIWMVILALTLVVAMIR. Residues 156 to 159 lie on the Cytoplasmic side of the membrane; the sequence is RERR.

This sequence belongs to the DsbB family.

Its subcellular location is the cell inner membrane. Its function is as follows. Required for disulfide bond formation in some periplasmic proteins. Acts by oxidizing the DsbA protein. This chain is Disulfide bond formation protein B, found in Ralstonia nicotianae (strain ATCC BAA-1114 / GMI1000) (Ralstonia solanacearum).